The primary structure comprises 411 residues: Squalene synthase (411 aa).

NADP(+)-binding residues include Arg49 and Arg74. Positions 77, 80, and 81 each coordinate Mg(2+). Residues Arg212, Lys312, and Arg314 each contribute to the NADP(+) site. The chain crosses the membrane as a helical span at residues 388-408 (SPVLIVVIFIILAIILAQLFG).

Belongs to the phytoene/squalene synthase family. Mg(2+) serves as cofactor.

It localises to the membrane. It carries out the reaction 2 (2E,6E)-farnesyl diphosphate + NADH + H(+) = squalene + 2 diphosphate + NAD(+). The enzyme catalyses 2 (2E,6E)-farnesyl diphosphate + NADPH + H(+) = squalene + 2 diphosphate + NADP(+). Functionally, converts farnesyl diphosphate (FPP) into squalene, a precursor for sterol biosynthesis in eukaryotes. This is Squalene synthase from Solanum lycopersicum (Tomato).